The chain runs to 211 residues: Large ribosomal subunit protein uL4 (211 aa).

Residues serine 50–serine 77 form a disordered region. Basic residues predominate over residues lysine 63 to lysine 72.

Belongs to the universal ribosomal protein uL4 family. Part of the 50S ribosomal subunit.

Functionally, one of the primary rRNA binding proteins, this protein initially binds near the 5'-end of the 23S rRNA. It is important during the early stages of 50S assembly. It makes multiple contacts with different domains of the 23S rRNA in the assembled 50S subunit and ribosome. Its function is as follows. Forms part of the polypeptide exit tunnel. This Mycoplasma genitalium (strain ATCC 33530 / DSM 19775 / NCTC 10195 / G37) (Mycoplasmoides genitalium) protein is Large ribosomal subunit protein uL4.